Reading from the N-terminus, the 242-residue chain is Small ribosomal subunit protein uS2 (242 aa).

This sequence belongs to the universal ribosomal protein uS2 family.

The protein is Small ribosomal subunit protein uS2 of Vibrio vulnificus (strain CMCP6).